Reading from the N-terminus, the 163-residue chain is Nucleotide-binding protein DET1318 (163 aa).

Belongs to the YajQ family.

Functionally, nucleotide-binding protein. This is Nucleotide-binding protein DET1318 from Dehalococcoides mccartyi (strain ATCC BAA-2266 / KCTC 15142 / 195) (Dehalococcoides ethenogenes (strain 195)).